The following is a 1219-amino-acid chain: Type IV pilus biogenesis factor PilY1 homolog PD_0502 (1219 aa).

The N-terminal stretch at Met-1–Ala-35 is a signal peptide. Residues Gly-212–Ser-234 form a disordered region. Residues Gln-958, Asn-960, Ile-962, and Asp-964 each coordinate Ca(2+).

Belongs to the PilY1 family.

The protein resides in the fimbrium. Its function is as follows. One of the three PilY1 homologs of X.fastidiosa, which are involved in bacterial twitching motility as component of the filamentous type IV pili (T4P). In Xylella fastidiosa (strain Temecula1 / ATCC 700964), this protein is Type IV pilus biogenesis factor PilY1 homolog PD_0502.